The primary structure comprises 224 residues: 7-cyano-7-deazaguanine synthase (224 aa).

14–24 (FSGGQDSTTCL) serves as a coordination point for ATP. Zn(2+)-binding residues include Cys190, Cys198, Cys201, and Cys204.

It belongs to the QueC family. Zn(2+) is required as a cofactor.

It catalyses the reaction 7-carboxy-7-deazaguanine + NH4(+) + ATP = 7-cyano-7-deazaguanine + ADP + phosphate + H2O + H(+). Its pathway is purine metabolism; 7-cyano-7-deazaguanine biosynthesis. Catalyzes the ATP-dependent conversion of 7-carboxy-7-deazaguanine (CDG) to 7-cyano-7-deazaguanine (preQ(0)). The chain is 7-cyano-7-deazaguanine synthase from Haemophilus ducreyi (strain 35000HP / ATCC 700724).